Reading from the N-terminus, the 419-residue chain is Multifunctional CCA protein (419 aa).

ATP-binding residues include G8 and R11. CTP is bound by residues G8 and R11. The Mg(2+) site is built by D21 and D23. Positions 91, 141, and 144 each coordinate ATP. CTP-binding residues include R91, R141, and R144. The HD domain occupies 230 to 331; that stretch reads TGVHVMMVLD…VRLLERCDAL (102 aa).

Belongs to the tRNA nucleotidyltransferase/poly(A) polymerase family. Bacterial CCA-adding enzyme type 1 subfamily. In terms of assembly, monomer. Can also form homodimers and oligomers. The cofactor is Mg(2+). It depends on Ni(2+) as a cofactor.

The enzyme catalyses a tRNA precursor + 2 CTP + ATP = a tRNA with a 3' CCA end + 3 diphosphate. The catalysed reaction is a tRNA with a 3' CCA end + 2 CTP + ATP = a tRNA with a 3' CCACCA end + 3 diphosphate. Catalyzes the addition and repair of the essential 3'-terminal CCA sequence in tRNAs without using a nucleic acid template. Adds these three nucleotides in the order of C, C, and A to the tRNA nucleotide-73, using CTP and ATP as substrates and producing inorganic pyrophosphate. tRNA 3'-terminal CCA addition is required both for tRNA processing and repair. Also involved in tRNA surveillance by mediating tandem CCA addition to generate a CCACCA at the 3' terminus of unstable tRNAs. While stable tRNAs receive only 3'-terminal CCA, unstable tRNAs are marked with CCACCA and rapidly degraded. The protein is Multifunctional CCA protein of Paracidovorax citrulli (strain AAC00-1) (Acidovorax citrulli).